A 386-amino-acid polypeptide reads, in one-letter code: Porin PorA (386 aa).

A signal peptide spans 1–35 (MKRTLGHALIIIGAALIVIAVLLPTFLVPRLRVIP). The segment covering 53–63 (DSSQLGKNEPT) has biased composition (polar residues). Residues 53-78 (DSSQLGKNEPTPNRKNDPRCKAETDE) are disordered. A compositionally biased stretch (basic and acidic residues) spans 64–78 (PNRKNDPRCKAETDE).

It belongs to the PorA family.

The protein localises to the secreted. Its subcellular location is the cell wall. Functionally, forms water-filled channels that favor the permeation of cations. The chain is Porin PorA from Corynebacterium amycolatum.